The sequence spans 325 residues: Glutarate 2-hydroxylase (325 aa).

Residues H160, D162, and H292 each contribute to the Fe cation site.

It belongs to the glutarate hydroxylase family. Homotetramer. Fe(2+) is required as a cofactor.

The catalysed reaction is glutarate + 2-oxoglutarate + O2 = (S)-2-hydroxyglutarate + succinate + CO2. It functions in the pathway amino-acid degradation. In terms of biological role, acts as an alpha-ketoglutarate-dependent dioxygenase catalyzing hydroxylation of glutarate (GA) to L-2-hydroxyglutarate (L2HG). Functions in a L-lysine degradation pathway that proceeds via cadaverine, glutarate and L-2-hydroxyglutarate. The sequence is that of Glutarate 2-hydroxylase from Shigella boydii serotype 18 (strain CDC 3083-94 / BS512).